Here is a 400-residue protein sequence, read N- to C-terminus: MVMIKMSDVDLFNKRILIRADLNVPIRNGIITSARRIHASLPTIQLALSRSNQVMVTSHLGRPVEGEYDSQFSLQPVVDYFQKNLSAKIGGVRLVKDYLDGINWISNELLILENVRFNKGEKTDDEVLAKKYASLCDVFVMDAFGSAHRIQSSTHNVSKFVKVACSGLLLEQEIAALHKALSNPVRPMVAIVGGSKVSSKLMVLESLSKVVDYLIVGGGIANTFLAAQGQNVGKSLYEAELISTAKSLLKDCNIPIPTDVRVSSEFSETAQSIMKNVTEIKDDEQILDLGDNSIINILNILNNAKTILWNGPVGVFEFPNFRKGTEMVSNAIANSNAFSIAGGGDTLMAIDLFGIANQISYVSTGGGAFLEFIEGKTLPSIEVLEEHKRMRNGNYSDINY.

Substrate is bound by residues 21-23 (DLN), Arg36, 59-62 (HLGR), Arg116, and Arg149. Residues Lys200, Glu317, and 343-346 (GGDT) contribute to the ATP site.

The protein belongs to the phosphoglycerate kinase family. As to quaternary structure, monomer.

The protein resides in the cytoplasm. The enzyme catalyses (2R)-3-phosphoglycerate + ATP = (2R)-3-phospho-glyceroyl phosphate + ADP. The protein operates within carbohydrate degradation; glycolysis; pyruvate from D-glyceraldehyde 3-phosphate: step 2/5. The protein is Phosphoglycerate kinase of Blochmanniella floridana.